We begin with the raw amino-acid sequence, 339 residues long: HTH-type transcriptional regulator SyrM 2 (339 aa).

Positions 32–89 (VDLNLLVELEALLQYRNITHAAQHVGRSQPAMSRALSRLRDMFNDDLLVRGSSGLVPT) constitute an HTH lysR-type domain. The H-T-H motif DNA-binding region spans 49-68 (ITHAAQHVGRSQPAMSRALS).

This sequence belongs to the LysR transcriptional regulatory family.

In terms of biological role, acts in trans to stimulate nod gene expression. This Sinorhizobium fredii (strain NBRC 101917 / NGR234) protein is HTH-type transcriptional regulator SyrM 2 (syrM2).